The sequence spans 210 residues: tRNA (guanine-N(7)-)-methyltransferase (210 aa).

Positions 36, 61, 90, and 112 each coordinate S-adenosyl-L-methionine. Asp112 is a catalytic residue. Substrate is bound by residues Lys116, Asp148, and Thr188–Glu191.

Belongs to the class I-like SAM-binding methyltransferase superfamily. TrmB family.

The catalysed reaction is guanosine(46) in tRNA + S-adenosyl-L-methionine = N(7)-methylguanosine(46) in tRNA + S-adenosyl-L-homocysteine. The protein operates within tRNA modification; N(7)-methylguanine-tRNA biosynthesis. In terms of biological role, catalyzes the formation of N(7)-methylguanine at position 46 (m7G46) in tRNA. In Mycoplasma genitalium (strain ATCC 33530 / DSM 19775 / NCTC 10195 / G37) (Mycoplasmoides genitalium), this protein is tRNA (guanine-N(7)-)-methyltransferase.